A 343-amino-acid polypeptide reads, in one-letter code: Plasminogen (343 aa).

Kringle domains are found at residues 1 to 17 and 41 to 120; these read APQA…DCML and AQEP…GCVA. The tract at residues 1–140 is plasmin heavy chain A; that stretch reads APQAPSVENP…LRRRSREHFC (140 aa). 3 cysteine pairs are disulfide-bonded: Cys15–Cys94, Cys36–Cys77, and Cys65–Cys89. The 228-residue stretch at 114 to 341 folds into the Peptidase S1 domain; it reads VVGGCVATPH…YVPWIEETMR (228 aa). Ser130 carries the phosphoserine modification. A disulfide bond links Cys140 and Cys156. The tract at residues 141 to 343 is plasmin light chain B; it reads GGTLISPEWV…PWIEETMRRY (203 aa). Catalysis depends on charge relay system residues His155 and Asp198. The residue at position 221 (Ser221) is a Phosphoserine. Intrachain disulfides connect Cys232–Cys299, Cys262–Cys278, and Cys289–Cys317. The Charge relay system role is filled by Ser293.

Belongs to the peptidase S1 family. Plasminogen subfamily. Interacts with CSPG4 and AMOT. Interacts (via the Kringle domains) with HRG; the interaction tethers PLG to the cell surface and enhances its activation. Interacts (via Kringle 4 domain) with ADA; the interaction stimulates PLG activation when in complex with DPP4. Angiostatin: Interacts with ATP5F1A; the interaction inhibits most of the angiogenic effects of angiostatin.

The protein resides in the secreted. The enzyme catalyses Preferential cleavage: Lys-|-Xaa &gt; Arg-|-Xaa, higher selectivity than trypsin. Converts fibrin into soluble products.. With respect to regulation, converted into plasmin by plasminogen activators, both plasminogen and its activator being bound to fibrin. Cannot be activated with streptokinase. Its function is as follows. Plasmin dissolves the fibrin of blood clots and acts as a proteolytic factor in a variety of other processes including embryonic development, tissue remodeling, tumor invasion, and inflammation. In ovulation, weakens the walls of the Graafian follicle. It activates the urokinase-type plasminogen activator, collagenases and several complement zymogens, such as C1, C4 and C5. Cleavage of fibronectin and laminin leads to cell detachment and apoptosis. Also cleaves fibrin, thrombospondin and von Willebrand factor. Its role in tissue remodeling and tumor invasion may be modulated by CSPG4. Binds to cells. The polypeptide is Plasminogen (PLG) (Ovis aries (Sheep)).